The primary structure comprises 177 residues: Large ribosomal subunit protein uL6 (177 aa).

The protein belongs to the universal ribosomal protein uL6 family. Part of the 50S ribosomal subunit.

This protein binds to the 23S rRNA, and is important in its secondary structure. It is located near the subunit interface in the base of the L7/L12 stalk, and near the tRNA binding site of the peptidyltransferase center. The protein is Large ribosomal subunit protein uL6 of Pasteurella multocida (strain Pm70).